We begin with the raw amino-acid sequence, 808 residues long: Phospholipase D alpha 1 (808 aa).

Residues 1 to 125 (MAQILLHGTL…LEGEEIDKWV (125 aa)) enclose the C2 domain. Residue aspartate 186 participates in Ca(2+) binding. Residues 326–364 (TMFTHHQKIVVVDSELPSGESEKRRILSFVGGIDLCDGR) form the PLD phosphodiesterase 1 domain. Catalysis depends on residues histidine 331, lysine 333, and aspartate 338. Position 331 (histidine 331) interacts with a 1,2-diacyl-sn-glycero-3-phosphate. The Ca(2+) site is built by histidine 370 and histidine 404. Residues glutamine 520 and histidine 659 each coordinate a 1,2-diacyl-sn-glycero-3-phosphate. One can recognise a PLD phosphodiesterase 2 domain in the interval 654–681 (FMIYVHSKMMIVDDEYIIVGSANINQRS). Catalysis depends on residues histidine 659, lysine 661, and aspartate 666. Glutamate 720 is a Ca(2+) binding site.

It belongs to the phospholipase D family. C2-PLD subfamily. The cofactor is Ca(2+).

The enzyme catalyses a 1,2-diacyl-sn-glycero-3-phosphocholine + H2O = a 1,2-diacyl-sn-glycero-3-phosphate + choline + H(+). Its function is as follows. Hydrolyzes glycerol-phospholipids at the terminal phosphodiesteric bond. Plays an important role in various cellular processes. This Nicotiana tabacum (Common tobacco) protein is Phospholipase D alpha 1 (PLD1).